A 120-amino-acid polypeptide reads, in one-letter code: Putative defensin-like protein 179 (120 aa).

Positions 1–27 (MERTSTSLLFLLSLLIIFASAVNQIRA) are cleaved as a signal peptide. 7 cysteine pairs are disulfide-bonded: Cys-37–Cys-56, Cys-40–Cys-63, Cys-44–Cys-65, Cys-74–Cys-120, Cys-85–Cys-105, Cys-90–Cys-114, and Cys-94–Cys-116.

This sequence belongs to the DEFL family.

It is found in the secreted. This is Putative defensin-like protein 179 (LCR57) from Arabidopsis thaliana (Mouse-ear cress).